A 162-amino-acid polypeptide reads, in one-letter code: MIINIGELARVSDKSRSKAAGKLVEVVSIQLKHGVKDEDSEVKVRIIPKDGKSKPQFGYVRAKFLESAFLKAVPAKGIETIDTSHVGVDFKWKLGQAIKFIAPCEFNFIKDDGRVVYTRAMCGYITDQWVEDGVKLYNVVFLGTYKVIPESWIKHYSNALYA.

In terms of assembly, monomer. Homodimer.

In terms of biological role, compacts the host nucleoid. Probably dysregulates hundreds of host genes including derepression of most of the H-NS regulon. Plays a role in the transcriptional regulation of middle promoters. The polypeptide is Transcription regulatory protein motB (motB) (Enterobacteria phage T4 (Bacteriophage T4)).